The primary structure comprises 101 residues: Small ribosomal subunit protein uS14 (101 aa).

The segment at Gly36–Gly72 is disordered. The span at Arg61 to Pro70 shows a compositional bias: basic and acidic residues.

It belongs to the universal ribosomal protein uS14 family. As to quaternary structure, part of the 30S ribosomal subunit. Contacts proteins S3 and S10.

Functionally, binds 16S rRNA, required for the assembly of 30S particles and may also be responsible for determining the conformation of the 16S rRNA at the A site. The polypeptide is Small ribosomal subunit protein uS14 (Clavibacter michiganensis subsp. michiganensis (strain NCPPB 382)).